A 177-amino-acid polypeptide reads, in one-letter code: Keratin-associated protein 1-1 (177 aa).

It belongs to the KRTAP type 1 family. In terms of assembly, interacts with hair keratins. In terms of tissue distribution, expressed in the middle/upper portions of the hair cortex, in the region termed the keratogenous zone.

Functionally, in the hair cortex, hair keratin intermediate filaments are embedded in an interfilamentous matrix, consisting of hair keratin-associated proteins (KRTAP), which are essential for the formation of a rigid and resistant hair shaft through their extensive disulfide bond cross-linking with abundant cysteine residues of hair keratins. The matrix proteins include the high-sulfur and high-glycine-tyrosine keratins. The sequence is that of Keratin-associated protein 1-1 (KRTAP1-1) from Homo sapiens (Human).